A 353-amino-acid polypeptide reads, in one-letter code: (S)-8-amino-7-oxononanoate synthase BioU (353 aa).

Position 10 to 14 (10 to 14) interacts with NAD(+); that stretch reads GTGGI. Lys147 serves as the catalytic Nucleophile. Lys147 bears the Allysine mark. 214-215 contributes to the NAD(+) binding site; it reads GT. Glu218 serves as the catalytic Proton acceptor. His222 serves as the catalytic Proton donor and proton acceptor.

It belongs to the BioU family. As to quaternary structure, monomer.

It carries out the reaction (8S)-8-amino-7-oxononanoate + L-lysyl-[protein] + CO2 = (S)-2-amino-6-oxohexanoyl-[protein] + (7R,8S)-8-amino-7-(carboxyamino)nonanoate + 2 H(+). It catalyses the reaction (8S)-8-amino-7-oxononanoate + L-lysyl-[protein] + NADPH + H(+) = N(6)-[(2S,3R)-2-amino-8-carboxyoctan-3-yl]-L-lysyl-[protein] + NADP(+) + H2O. The enzyme catalyses N(6)-[(2S,3R)-2-amino-8-carboxyoctan-3-yl]-L-lysyl-[protein] + CO2 + NADP(+) + H2O = (S)-2-amino-6-oxohexanoyl-[protein] + (7R,8S)-8-amino-7-(carboxyamino)nonanoate + NADPH + 3 H(+). The catalysed reaction is (8S)-8-amino-7-oxononanoate + L-lysyl-[protein] + NADH + H(+) = N(6)-[(2S,3R)-2-amino-8-carboxyoctan-3-yl]-L-lysyl-[protein] + NAD(+) + H2O. It carries out the reaction N(6)-[(2S,3R)-2-amino-8-carboxyoctan-3-yl]-L-lysyl-[protein] + CO2 + NAD(+) + H2O = (S)-2-amino-6-oxohexanoyl-[protein] + (7R,8S)-8-amino-7-(carboxyamino)nonanoate + NADH + 3 H(+). The protein operates within cofactor biosynthesis; biotin biosynthesis. Functionally, a 'suicide' enzyme that participates in biotin synthesis. Catalyzes the formation of (S)-8-amino-7-oxononanoate (DAN-carbamic acid) from (7R,8S)-8-amino-7-(carboxyamino)nonanoate (DAN), a function equivalent to the cannonical BioA reaction and the first half-reaction of BioD. The cellular requirement for biotin is thought be low enough that this single turnover enzyme supplies a sufficient amount of the cofactor. Overall it catalyzes three reactions: formation of a covalent linkage with 8-amino-7-oxononanoate to yield a BioU-DAN conjugate at the epsilon-amino group of Lys124 of BioU using NAD(P)H, carboxylation of the conjugate to form BioU-DAN-carbamic acid, and release of DAN-carbamic acid using NAD(P)+. Complements a bioA deletion in E.coli. The chain is (S)-8-amino-7-oxononanoate synthase BioU from Haloferax mediterranei (strain ATCC 33500 / DSM 1411 / JCM 8866 / NBRC 14739 / NCIMB 2177 / R-4) (Halobacterium mediterranei).